We begin with the raw amino-acid sequence, 454 residues long: Probable succinate-semialdehyde dehydrogenase [NADP(+)] (454 aa).

Residues 130–131 (WN), 154–157 (KHAS), and 206–207 (GS) each bind NADP(+). The active-site Proton acceptor is E228. L229 is an NADP(+) binding site. C262 serves as the catalytic Nucleophile. An NADP(+)-binding site is contributed by E359.

It belongs to the aldehyde dehydrogenase family.

The enzyme catalyses succinate semialdehyde + NADP(+) + H2O = succinate + NADPH + 2 H(+). The protein operates within amino-acid degradation; 4-aminobutanoate degradation. Catalyzes the NADP(+) dependent oxidation of succinate semialdehyde to succinate. The sequence is that of Probable succinate-semialdehyde dehydrogenase [NADP(+)] (gabD) from Synechocystis sp. (strain ATCC 27184 / PCC 6803 / Kazusa).